Consider the following 515-residue polypeptide: MVRASEQEQETYRSRLFNFKWRNNDNNSATRHNKSLSVETGLDEAATGSHDAEPLTIIHPSQGPPLSRSAADEAVLAALAASQARERQLLADMEQMKERFSKLLLGEDNSGGGKGVSSALALSNAITNLAASVFGEQRRLEPMPAERRARWRKEIDWLLSVTDYVVEFAPSQQKNKDGTNMEIMTTRQRTDLHMNIPALKKLDAMLIDCLENFKDQSEFSYISKDSPDLDGKRNDEKWWIPTVKVPPDGLSEASRRFLQYQKDCVNQVLKAAMAINAQVLFEMEIPESYIDSLPKNGRASLGDQMYKNITVDFFDPDQFLSSMDMSSEHKIVDLKNRIEASIIIWKRKMVYKDNKSSAPWASGVSLEKREVFEERAETILLILKQRYPGISQSSLDISKIQFNEDVGQAVLESYSRILESLAYTVLSRIDDVLEADRAGNKRNTPLEAEEETLVGSMTLSDFMGWDFDQAANAELESKKDLPDDPLIKEKLSVVTTKKTSYLETLGGVKSPTARH.

In terms of domain architecture, PRONE spans 83-446 (QARERQLLAD…RAGNKRNTPL (364 aa)). The residue at position 510 (Ser510) is a Phosphoserine.

Interacts (via C-terminus) with PRK2. Interacts with PRK6. In terms of tissue distribution, expressed in pollen grains.

Its subcellular location is the cytoplasm. It localises to the cell membrane. Phosphorylation at Ser-510 by PRK2 may release ROPGEF12 auto-inhibition, thereby activating ROPGEF12 and downstream Rop signaling. Guanine-nucleotide exchange factor (GEF) that acts as an activator of Rop (Rho of plants) GTPases by promoting the exchange of GDP for GTP. May be recruited by PRK2 at the plasma membrane to maintain polar Rop activity in the pollen tube and control polarized pollen tube growth. The chain is Rop guanine nucleotide exchange factor 12 from Arabidopsis thaliana (Mouse-ear cress).